Consider the following 827-residue polypeptide: N-terminal kinase-like protein (827 aa).

Residues Met1–Leu309 enclose the Protein kinase domain. HEAT repeat units follow at residues Ile345–Gln383, Ile384–Glu422, and Val502–Ser540. A compositionally biased stretch (low complexity) spans Asp586–Ser624. Residues Asp586–Asp827 form a disordered region. A compositionally biased stretch (basic and acidic residues) spans Glu630–Arg640. The span at Trp641–Ala652 shows a compositional bias: acidic residues. The segment covering Asp667–Val678 has biased composition (basic and acidic residues). Composition is skewed to polar residues over residues Asp679–Val690 and Asn737–Arg746. Residues Gly774–Glu783 show a composition bias toward acidic residues. A coiled-coil region spans residues Leu788–Gly817. Basic and acidic residues predominate over residues Glu792 to Ala814.

The protein belongs to the protein kinase superfamily.

Its function is as follows. Regulates COPI-mediated retrograde protein traffic at the interface between the Golgi apparatus and the endoplasmic reticulum. Involved in the maintenance of the Golgi apparatus morphology. This is N-terminal kinase-like protein (scyl1) from Xenopus tropicalis (Western clawed frog).